The following is a 408-amino-acid chain: PCI domain-containing protein 2 (408 aa).

Ala2 carries the post-translational modification N-acetylalanine. At Ser45 the chain carries Phosphoserine. One can recognise a PCI domain in the interval 210–400; it reads VTYRYYVGRK…QKLVVSKQNP (191 aa).

Belongs to the CSN12 family. Component of the nuclear pore complex (NPC)-associated TREX-2 complex (transcription and export complex 2), composed of at least GANP, 2 copies of ENY2, PCID2, SEM1/DSS1, and either centrin CETN2 or centrin CETN3. The TREX-2 complex also associates with ALYREF/ALY and with the nucleoporin NUP153. Interacts with BRCA2. Interacts with SRCAP chromatin remodeling complex component ZNHIT1; the interaction results in inhibition of SRCAP complex activity, preventing the deposition of histone variant H2AZ1/H2A.Z to lymphoid fate regulator genes and restricting lymphoid lineage commitment.

It is found in the cytoplasm. The protein localises to the nucleus. It localises to the nuclear pore complex. Functionally, required for B-cell survival through the regulation of the expression of cell-cycle checkpoint MAD2L1 protein during B cell differentiation. As a component of the TREX-2 complex, involved in the export of mRNAs to the cytoplasm through the nuclear pores. Binds and stabilizes BRCA2 and is thus involved in the control of R-loop-associated DNA damage and transcription-associated genomic instability. Blocks the activity of the SRCAP chromatin remodeling complex by interacting with SRCAP complex member ZNHIT1 and inhibiting its interaction with the complex. This prevents the deposition of histone variant H2AZ1/H2A.Z at the nucleosomes of key lymphoid fate regulator genes which suppresses their expression and restricts lymphoid lineage commitment. The chain is PCI domain-containing protein 2 (PCID2) from Bos taurus (Bovine).